Reading from the N-terminus, the 98-residue chain is Aspartyl/glutamyl-tRNA(Asn/Gln) amidotransferase subunit C (98 aa).

It belongs to the GatC family. In terms of assembly, heterotrimer of A, B and C subunits.

It carries out the reaction L-glutamyl-tRNA(Gln) + L-glutamine + ATP + H2O = L-glutaminyl-tRNA(Gln) + L-glutamate + ADP + phosphate + H(+). The enzyme catalyses L-aspartyl-tRNA(Asn) + L-glutamine + ATP + H2O = L-asparaginyl-tRNA(Asn) + L-glutamate + ADP + phosphate + 2 H(+). Functionally, allows the formation of correctly charged Asn-tRNA(Asn) or Gln-tRNA(Gln) through the transamidation of misacylated Asp-tRNA(Asn) or Glu-tRNA(Gln) in organisms which lack either or both of asparaginyl-tRNA or glutaminyl-tRNA synthetases. The reaction takes place in the presence of glutamine and ATP through an activated phospho-Asp-tRNA(Asn) or phospho-Glu-tRNA(Gln). In Mycobacterium avium (strain 104), this protein is Aspartyl/glutamyl-tRNA(Asn/Gln) amidotransferase subunit C.